The chain runs to 493 residues: Galactose-1-phosphate uridylyltransferase (493 aa).

Belongs to the galactose-1-phosphate uridylyltransferase type 2 family.

The protein resides in the cytoplasm. It carries out the reaction alpha-D-galactose 1-phosphate + UDP-alpha-D-glucose = alpha-D-glucose 1-phosphate + UDP-alpha-D-galactose. The protein operates within carbohydrate metabolism; galactose metabolism. In Streptococcus salivarius, this protein is Galactose-1-phosphate uridylyltransferase.